A 483-amino-acid polypeptide reads, in one-letter code: Glycogen synthase (483 aa).

K15 serves as a coordination point for ADP-alpha-D-glucose.

It belongs to the glycosyltransferase 1 family. Bacterial/plant glycogen synthase subfamily.

It carries out the reaction [(1-&gt;4)-alpha-D-glucosyl](n) + ADP-alpha-D-glucose = [(1-&gt;4)-alpha-D-glucosyl](n+1) + ADP + H(+). Its pathway is glycan biosynthesis; glycogen biosynthesis. In terms of biological role, synthesizes alpha-1,4-glucan chains using ADP-glucose. The polypeptide is Glycogen synthase (Thioalkalivibrio sulfidiphilus (strain HL-EbGR7)).